A 925-amino-acid polypeptide reads, in one-letter code: MEYNFQEIEKRVQGQWRKDKVYRVAEDTSKKPFYVLDMFPYPSGAGLHVGHPLGYIASDIFSRYKRLRGFNVLHPMGYDAFGLPAEQYAIQTGQHPEKTTEENTARYREQLDKIGFSYDWEREIRTCDPNYYKWTQWAFLKMFDSYYCNQAQQARPISELIEVFARQGNEGLNVACGEGVRFTAEEWTAMSEKEQQEILMNYRLAYLGDTMVNWCPALGTVLANDEVKDGVSERGGHPVEQKKMRQWCLRVSAYAERLLHDLETLDWTESLKETQRNWIGRSEGAEMEFRLAGKDCTFTIFTTRADTIFGVTFMVLAPESELVEEVTTEEQRAAVETYLTETKRRTERERISDKRVSGVFSGSYAINPLTGKEIPIWISDYVLAGYGTGAIMAVPAHDTRDFAFARHFDLPIVQVVVPEGETATDPATWEDAKDSKSGIMVNSDFLNGLSVEDAIAQTKEYIREKHLGCVKVNYRLRDAIFSRQRYWGEPFPIYYKEGMPHALDEDRLPLRLPEVDKFLPTESGEPPLGRATGWHTAEGYPYELSTMPGFAGSSAYYLRYMDPQNDTALVSRSANEYWRHVDLYIGGTEHATGHLIYSRFWNKFLFDLGIVCEAEPFRKLVNQGMIQGRSNFVYRIKNTNTFVSYGLREQYEVTPLHVDVNIVSNDQLDIDRFRAWRPEYASAEFILEDGKYICGWAIEKMSKSMFNVVNPDDIIARYGADTLRLYEMFLGPLEQSKPWDTNGIDGVHRFLKKFWALYYNADGIRVTDTAPTKEELKSLHKLIKKVGQDIESFSFNTSIPAFMICVNELTAAKTTSRAILCPLLTVLSPFAPHITEWLWQELGVEGSIVTATWPEYNEEYLVESCVRYPVSFNGKVRFNIELPADMSKKDVEQAALTAPEAARWLEGKSPKKVIVVPGRIVNVVV.

The 'HIGH' region motif lies at 40 to 51 (PYPSGAGLHVGH). The short motif at 700–704 (KMSKS) is the 'KMSKS' region element. Lys703 contributes to the ATP binding site.

Belongs to the class-I aminoacyl-tRNA synthetase family.

Its subcellular location is the cytoplasm. The catalysed reaction is tRNA(Leu) + L-leucine + ATP = L-leucyl-tRNA(Leu) + AMP + diphosphate. This Porphyromonas gingivalis (strain ATCC 33277 / DSM 20709 / CIP 103683 / JCM 12257 / NCTC 11834 / 2561) protein is Leucine--tRNA ligase.